A 264-amino-acid polypeptide reads, in one-letter code: Thymidylate synthase (264 aa).

Arg21 provides a ligand contact to dUMP. His51 is a binding site for (6R)-5,10-methylene-5,6,7,8-tetrahydrofolate. A dUMP-binding site is contributed by 126–127 (RR). Cys146 (nucleophile) is an active-site residue. Residues 166–169 (RSAD), Asn177, and 207–209 (HLY) contribute to the dUMP site. Asp169 provides a ligand contact to (6R)-5,10-methylene-5,6,7,8-tetrahydrofolate. Position 263 (Ala263) interacts with (6R)-5,10-methylene-5,6,7,8-tetrahydrofolate.

The protein belongs to the thymidylate synthase family. Bacterial-type ThyA subfamily. Homodimer.

The protein resides in the cytoplasm. It carries out the reaction dUMP + (6R)-5,10-methylene-5,6,7,8-tetrahydrofolate = 7,8-dihydrofolate + dTMP. It participates in pyrimidine metabolism; dTTP biosynthesis. Its function is as follows. Catalyzes the reductive methylation of 2'-deoxyuridine-5'-monophosphate (dUMP) to 2'-deoxythymidine-5'-monophosphate (dTMP) while utilizing 5,10-methylenetetrahydrofolate (mTHF) as the methyl donor and reductant in the reaction, yielding dihydrofolate (DHF) as a by-product. This enzymatic reaction provides an intracellular de novo source of dTMP, an essential precursor for DNA biosynthesis. This is Thymidylate synthase from Bartonella quintana (strain Toulouse) (Rochalimaea quintana).